The following is a 359-amino-acid chain: Histidinol-phosphate aminotransferase (359 aa).

At lysine 217 the chain carries N6-(pyridoxal phosphate)lysine.

Belongs to the class-II pyridoxal-phosphate-dependent aminotransferase family. Histidinol-phosphate aminotransferase subfamily. As to quaternary structure, homodimer. It depends on pyridoxal 5'-phosphate as a cofactor.

It catalyses the reaction L-histidinol phosphate + 2-oxoglutarate = 3-(imidazol-4-yl)-2-oxopropyl phosphate + L-glutamate. The protein operates within amino-acid biosynthesis; L-histidine biosynthesis; L-histidine from 5-phospho-alpha-D-ribose 1-diphosphate: step 7/9. The polypeptide is Histidinol-phosphate aminotransferase (Salmonella choleraesuis (strain SC-B67)).